The sequence spans 635 residues: Biosynthetic arginine decarboxylase (635 aa).

K101 is subject to N6-(pyridoxal phosphate)lysine. 284–294 is a substrate binding site; it reads VDVGGGLGVDY.

It belongs to the Orn/Lys/Arg decarboxylase class-II family. SpeA subfamily. It depends on Mg(2+) as a cofactor. Pyridoxal 5'-phosphate is required as a cofactor.

The enzyme catalyses L-arginine + H(+) = agmatine + CO2. Its pathway is amine and polyamine biosynthesis; agmatine biosynthesis; agmatine from L-arginine: step 1/1. Its function is as follows. Catalyzes the biosynthesis of agmatine from arginine. The sequence is that of Biosynthetic arginine decarboxylase from Tolumonas auensis (strain DSM 9187 / NBRC 110442 / TA 4).